A 115-amino-acid chain; its full sequence is NADH-ubiquinone oxidoreductase chain 3 (115 aa).

Transmembrane regions (helical) follow at residues 4–24 (LTAL…AFWL), 55–75 (FFLV…LLPL), and 87–107 (MMLT…YEWM).

This sequence belongs to the complex I subunit 3 family. In terms of assembly, core subunit of respiratory chain NADH dehydrogenase (Complex I) which is composed of 45 different subunits. Interacts with TMEM186. Interacts with TMEM242.

It is found in the mitochondrion inner membrane. The catalysed reaction is a ubiquinone + NADH + 5 H(+)(in) = a ubiquinol + NAD(+) + 4 H(+)(out). Functionally, core subunit of the mitochondrial membrane respiratory chain NADH dehydrogenase (Complex I) which catalyzes electron transfer from NADH through the respiratory chain, using ubiquinone as an electron acceptor. Essential for the catalytic activity of complex I. The sequence is that of NADH-ubiquinone oxidoreductase chain 3 from Peromyscus boylii (Brush deermouse).